The sequence spans 249 residues: Methylthioribulose-1-phosphate dehydratase (249 aa).

Cys102 is a substrate binding site. Residues His120 and His122 each contribute to the Zn(2+) site. Glu148 functions as the Proton donor/acceptor in the catalytic mechanism. His205 is a binding site for Zn(2+).

It belongs to the aldolase class II family. MtnB subfamily. Requires Zn(2+) as cofactor.

It is found in the cytoplasm. It carries out the reaction 5-(methylsulfanyl)-D-ribulose 1-phosphate = 5-methylsulfanyl-2,3-dioxopentyl phosphate + H2O. Its pathway is amino-acid biosynthesis; L-methionine biosynthesis via salvage pathway; L-methionine from S-methyl-5-thio-alpha-D-ribose 1-phosphate: step 2/6. Its function is as follows. Catalyzes the dehydration of methylthioribulose-1-phosphate (MTRu-1-P) into 2,3-diketo-5-methylthiopentyl-1-phosphate (DK-MTP-1-P). This chain is Methylthioribulose-1-phosphate dehydratase, found in Botryotinia fuckeliana (strain B05.10) (Noble rot fungus).